The primary structure comprises 194 residues: Imidazoleglycerol-phosphate dehydratase (194 aa).

This sequence belongs to the imidazoleglycerol-phosphate dehydratase family.

Its subcellular location is the cytoplasm. The enzyme catalyses D-erythro-1-(imidazol-4-yl)glycerol 3-phosphate = 3-(imidazol-4-yl)-2-oxopropyl phosphate + H2O. It functions in the pathway amino-acid biosynthesis; L-histidine biosynthesis; L-histidine from 5-phospho-alpha-D-ribose 1-diphosphate: step 6/9. The sequence is that of Imidazoleglycerol-phosphate dehydratase from Bacillus thuringiensis (strain Al Hakam).